Reading from the N-terminus, the 113-residue chain is Hydrogenase maturation factor HypA (113 aa).

H2 contributes to the Ni(2+) binding site. Zn(2+) contacts are provided by C73, C76, C89, and C92.

It belongs to the HypA/HybF family.

Involved in the maturation of [NiFe] hydrogenases. Required for nickel insertion into the metal center of the hydrogenase. The protein is Hydrogenase maturation factor HypA of Prosthecochloris aestuarii (strain DSM 271 / SK 413).